A 102-amino-acid polypeptide reads, in one-letter code: Small ribosomal subunit protein uS10 (102 aa).

It belongs to the universal ribosomal protein uS10 family. As to quaternary structure, part of the 30S ribosomal subunit.

Involved in the binding of tRNA to the ribosomes. The sequence is that of Small ribosomal subunit protein uS10 from Staphylococcus aureus (strain Mu3 / ATCC 700698).